We begin with the raw amino-acid sequence, 310 residues long: MALPRRPPTLTRVYLDGPFGIGKTSILNAMPDHTPDGAPILKVYEPMKYWRCQSTDLVVAANETPERRRGGALSRFQSDMIMASIQARFADPYLLFHERLSSKCRGKIEICDTPAIILMLDRHPVAAILCFPITRYLLGEYSLEMLISSIIRLPLESPGCNLTVTILPDEKEHVNRICSRDRPGETADRNMLRTLNAVYASLVDTVKYANLTCPYEKESWEMEWLGLPWFEESLLEEFISRPRPVICSRTRMPLDRTLLAIFKRKELCSENGELLTQYSWILWGLLTKLHTINVELFDISGMSRRECATL.

Position 17 to 24 (17 to 24 (GPFGIGKT)) interacts with ATP. Catalysis depends on E45, which acts as the Proton acceptor. Q86 contributes to the substrate binding site. An ATP-binding site is contributed by R176. R182 contacts substrate.

This sequence belongs to the herpesviridae thymidine kinase family. In terms of assembly, homodimer.

The catalysed reaction is thymidine + ATP = dTMP + ADP + H(+). Catalyzes the transfer of the gamma-phospho group of ATP to thymidine to generate dTMP in the salvage pathway of pyrimidine synthesis. The dTMP serves as a substrate for DNA polymerase during viral DNA replication. Allows the virus to be reactivated and to grow in non-proliferative cells lacking a high concentration of phosphorylated nucleic acid precursors. In Gallus gallus (Chicken), this protein is Thymidine kinase.